Reading from the N-terminus, the 97-residue chain is Ig heavy chain V region 914 (97 aa).

The Ig-like domain maps to 1-97 (EVKLVESGGG…EDTAMYYCAR (97 aa)).

This is Ig heavy chain V region 914 from Mus musculus (Mouse).